The chain runs to 938 residues: Isoleucine--tRNA ligase (938 aa).

A 'HIGH' region motif is present at residues 58–68 (PYANGSIHIGH). At Lys183 the chain carries N6-acetyllysine. Position 561 (Glu561) interacts with L-isoleucyl-5'-AMP. Positions 602–606 (KMSKS) match the 'KMSKS' region motif. Lys605 lines the ATP pocket. Zn(2+)-binding residues include Cys901, Cys904, Cys921, and Cys924.

This sequence belongs to the class-I aminoacyl-tRNA synthetase family. IleS type 1 subfamily. As to quaternary structure, monomer. Zn(2+) serves as cofactor.

It localises to the cytoplasm. The catalysed reaction is tRNA(Ile) + L-isoleucine + ATP = L-isoleucyl-tRNA(Ile) + AMP + diphosphate. Functionally, catalyzes the attachment of isoleucine to tRNA(Ile). As IleRS can inadvertently accommodate and process structurally similar amino acids such as valine, to avoid such errors it has two additional distinct tRNA(Ile)-dependent editing activities. One activity is designated as 'pretransfer' editing and involves the hydrolysis of activated Val-AMP. The other activity is designated 'posttransfer' editing and involves deacylation of mischarged Val-tRNA(Ile). In Escherichia coli (strain 55989 / EAEC), this protein is Isoleucine--tRNA ligase.